A 526-amino-acid polypeptide reads, in one-letter code: MIRTALLSVSDKNGIVPFAKSLHEQGIKLISTGGTAKLLAENGLPVVEISSLTKFPEMLDGRVKTLHPMVHGGLLARRDFPEHMAALKEYGINTIDMLVINLYPFNETVAKENCSFEDAVENIDIGGPAMLRAAAKNHQDVTVLISPEDYAPVLAEMKANQNSVSYKTNLALAKKVFAHTAQYDGAIANYLSALGDDLDHKARSAYPETLHLAFEKVQEMRYGENPHQAAAFYKDIYPVDGALANYKQLQGKELSYNNIADADSAWECVKSFTGNAGGAAACVIIKHANPCGVAVGASALEAYQKAFKTDPSSAFGGIIAFNVSCDGAAAEAISKQFVEVLIAPSFSDEAKTIFAAKQNMRLLEIPLGTAFNTFDFKRVGGGLLVQSPDAKNVLENEMCVVSKRLPTPSEMHDMMFAWRVAKFVKSNAIIYCANGMTLGIGAGQMSRVDSARMASIKAKNAGLSLKGSAVASDAFFPFRDGLDVVVNGGASCAIQPGGSMRDDEIIAAADEHGIAMIFTGTRHFRH.

Residues 1-145 enclose the MGS-like domain; sequence MIRTALLSVS…KNHQDVTVLI (145 aa).

The protein belongs to the PurH family.

It catalyses the reaction (6R)-10-formyltetrahydrofolate + 5-amino-1-(5-phospho-beta-D-ribosyl)imidazole-4-carboxamide = 5-formamido-1-(5-phospho-D-ribosyl)imidazole-4-carboxamide + (6S)-5,6,7,8-tetrahydrofolate. The enzyme catalyses IMP + H2O = 5-formamido-1-(5-phospho-D-ribosyl)imidazole-4-carboxamide. It participates in purine metabolism; IMP biosynthesis via de novo pathway; 5-formamido-1-(5-phospho-D-ribosyl)imidazole-4-carboxamide from 5-amino-1-(5-phospho-D-ribosyl)imidazole-4-carboxamide (10-formyl THF route): step 1/1. Its pathway is purine metabolism; IMP biosynthesis via de novo pathway; IMP from 5-formamido-1-(5-phospho-D-ribosyl)imidazole-4-carboxamide: step 1/1. The sequence is that of Bifunctional purine biosynthesis protein PurH from Polynucleobacter necessarius subsp. necessarius (strain STIR1).